The chain runs to 210 residues: Protein GET1 (210 aa).

The Lumenal portion of the chain corresponds to 1-4 (MPSL). A helical membrane pass occupies residues 5–24 (LIIVLIIHVVTYLINTIGAN). The Cytoplasmic portion of the chain corresponds to 25 to 110 (TIDSLLWLLY…SFDLAVKSVR (86 aa)). Residues 39-95 (NQTSQTADEQRRLKREVMQLKREMNATSSQDEFAKWAKLRRRHDKTMEEYEAKNKAL) adopt a coiled-coil conformation. A helical membrane pass occupies residues 111 to 131 (FFSTTGLKLFLQFWFSKTPIF). Residues 132-155 (ELPRGWIPWQVEWVLSFPRAPLGT) are Lumenal-facing. A helical membrane pass occupies residues 156–172 (VSIQIWGGVCATVVSLA). Residues 173–210 (GDAIGVVNVYLTSKAPKQKEPATSGENSARPMAIKKEL) are Cytoplasmic-facing. The disordered stretch occupies residues 189 to 210 (KQKEPATSGENSARPMAIKKEL).

This sequence belongs to the WRB/GET1 family. Interacts with GET3.

It is found in the endoplasmic reticulum membrane. Functionally, required for the post-translational delivery of tail-anchored (TA) proteins to the endoplasmic reticulum. Acts as a membrane receptor for soluble GET3, which recognizes and selectively binds the transmembrane domain of TA proteins in the cytosol. The chain is Protein GET1 from Coccidioides posadasii (strain C735) (Valley fever fungus).